Reading from the N-terminus, the 331-residue chain is Glycerol-3-phosphate dehydrogenase [NAD(P)+] (331 aa).

NADPH contacts are provided by Ser-11, Phe-12, Arg-32, and Lys-106. Sn-glycerol 3-phosphate is bound by residues Lys-106, Gly-134, and Ser-136. Ala-138 serves as a coordination point for NADPH. The sn-glycerol 3-phosphate site is built by Lys-189, Asp-242, Ser-252, Arg-253, and Asn-254. Lys-189 (proton acceptor) is an active-site residue. An NADPH-binding site is contributed by Arg-253. NADPH-binding residues include Val-277 and Glu-279.

The protein belongs to the NAD-dependent glycerol-3-phosphate dehydrogenase family.

The protein localises to the cytoplasm. It catalyses the reaction sn-glycerol 3-phosphate + NAD(+) = dihydroxyacetone phosphate + NADH + H(+). It carries out the reaction sn-glycerol 3-phosphate + NADP(+) = dihydroxyacetone phosphate + NADPH + H(+). It participates in membrane lipid metabolism; glycerophospholipid metabolism. In terms of biological role, catalyzes the reduction of the glycolytic intermediate dihydroxyacetone phosphate (DHAP) to sn-glycerol 3-phosphate (G3P), the key precursor for phospholipid synthesis. This is Glycerol-3-phosphate dehydrogenase [NAD(P)+] from Clostridium perfringens (strain ATCC 13124 / DSM 756 / JCM 1290 / NCIMB 6125 / NCTC 8237 / Type A).